Reading from the N-terminus, the 492-residue chain is uncharacterized protein (492 aa).

Residues 1–22 (MIRPNMFALLMLVVLAITSVNA) form the signal peptide. N-linked (GlcNAc...) asparagine; by host glycosylation is found at Asn92, Asn97, Asn119, Asn146, Asn213, Asn267, and Asn458.

It is found in the secreted. This is an uncharacterized protein from Acanthamoeba polyphaga (Amoeba).